The chain runs to 208 residues: Small ribosomal subunit protein eS8 (208 aa).

Residues 1–27 (MGISRDNWHKRRKTGGKRKPYHKKRKY) are disordered. G2 carries N-myristoyl glycine lipidation. Positions 8-26 (WHKRRKTGGKRKPYHKKRK) are enriched in basic residues. 2 positions are modified to N6-acetyllysine: K37 and K128. A Phosphothreonine modification is found at T130. S160 bears the Phosphoserine mark. Glycyl lysine isopeptide (Lys-Gly) (interchain with G-Cter in SUMO2) cross-links involve residues K170 and K193.

Belongs to the eukaryotic ribosomal protein eS8 family. As to quaternary structure, component of the small ribosomal subunit. Identified in a IGF2BP1-dependent mRNP granule complex containing untranslated mRNAs. Part of the small subunit (SSU) processome, composed of more than 70 proteins and the RNA chaperone small nucleolar RNA (snoRNA) U3.

Its subcellular location is the cytoplasm. It localises to the membrane. The protein localises to the nucleus. It is found in the nucleolus. Functionally, component of the small ribosomal subunit. The ribosome is a large ribonucleoprotein complex responsible for the synthesis of proteins in the cell. Part of the small subunit (SSU) processome, first precursor of the small eukaryotic ribosomal subunit. During the assembly of the SSU processome in the nucleolus, many ribosome biogenesis factors, an RNA chaperone and ribosomal proteins associate with the nascent pre-rRNA and work in concert to generate RNA folding, modifications, rearrangements and cleavage as well as targeted degradation of pre-ribosomal RNA by the RNA exosome. The chain is Small ribosomal subunit protein eS8 (Rps8) from Mus musculus (Mouse).